Here is a 231-residue protein sequence, read N- to C-terminus: MSIVSLSELLEAGAHFGHQARRWNPRMFPYIYTERNGIHIIDLVQTAQLLTEACQFIRDASQEGKKFLFLGTKRQAAGVIAEQAIRSNSYYVNQRWLGGMLTNWMTIKSRVERLQRLEMDEQAGLIDMLPKKEAAINRRELDKLRKNLNGIKNMSRLPDFIVVVDQKRETTAIQECIKLGIPIICILDTNCNPEIIDIPIPANDDAIRSIKLIISRIADSIIEGSTYALNK.

This sequence belongs to the universal ribosomal protein uS2 family.

Its subcellular location is the plastid. It is found in the chloroplast. The protein is Small ribosomal subunit protein uS2c (rps2) of Gracilaria tenuistipitata var. liui (Red alga).